The primary structure comprises 341 residues: Enduracididine beta-hydroxylase (341 aa).

Fe cation is bound by residues His-146 and Glu-148. The disordered stretch occupies residues 203-223; it reads HRIHGKAPGDESARESALRER. His-300 lines the Fe cation pocket.

Belongs to the clavaminate synthase family. The cofactor is Fe(2+).

It carries out the reaction L-enduracididine + 2-oxoglutarate + O2 = (3S)-3-hydroxy-L-enduracididine + succinate + CO2. The protein operates within antibiotic biosynthesis. Hydroxylates the beta carbon of free L-enduracididine to produce (3S)-3-hydroxy-L-enduracididine in biosynthesis of the nonproteinogenic amino acid beta-hydroxyenduracididine, a component of antibiotic mannopeptimycin. This is Enduracididine beta-hydroxylase (mppO) from Streptomyces hygroscopicus.